The sequence spans 316 residues: Probable porphobilinogen deaminase (316 aa).

The residue at position 234 (C234) is an S-(dipyrrolylmethanemethyl)cysteine.

The protein belongs to the HMBS family. It depends on dipyrromethane as a cofactor.

It catalyses the reaction 4 porphobilinogen + H2O = hydroxymethylbilane + 4 NH4(+). It functions in the pathway porphyrin-containing compound metabolism; protoporphyrin-IX biosynthesis; coproporphyrinogen-III from 5-aminolevulinate: step 2/4. Functionally, tetrapolymerization of the monopyrrole PBG into the hydroxymethylbilane pre-uroporphyrinogen in several discrete steps. The sequence is that of Probable porphobilinogen deaminase from Methanosarcina barkeri (strain Fusaro / DSM 804).